We begin with the raw amino-acid sequence, 132 residues long: Amicyanin (132 aa).

The N-terminal stretch at Met1–Ala26 is a signal peptide. Pyrrolidone carboxylic acid is present on Gln27. Residues Gln27–Glu132 enclose the Plastocyanin-like domain. The Cu cation site is built by His80, Cys119, His122, and Met125.

Cu cation serves as cofactor.

It is found in the periplasm. It participates in one-carbon metabolism; methylamine degradation. Functionally, primary acceptor of electrons from methylamine dehydrogenase. Passes those electrons on either a soluble cytochrome c or to pseudoazurin. This is Amicyanin (mauC) from Paracoccus versutus (Thiobacillus versutus).